A 142-amino-acid chain; its full sequence is Large ribosomal subunit protein uL16 (142 aa).

This sequence belongs to the universal ribosomal protein uL16 family. Part of the 50S ribosomal subunit.

Functionally, binds 23S rRNA and is also seen to make contacts with the A and possibly P site tRNAs. This Gemmatimonas aurantiaca (strain DSM 14586 / JCM 11422 / NBRC 100505 / T-27) protein is Large ribosomal subunit protein uL16.